The sequence spans 48 residues: Large ribosomal subunit protein bL32 (48 aa).

Residues 1 to 20 show a composition bias toward basic residues; the sequence is MAVPKRRVSKTRAAKRRTHY. Positions 1–48 are disordered; it reads MAVPKRRVSKTRAAKRRTHYKVSLPMPIKDKDGSYKMPHRANPTTKEY.

It belongs to the bacterial ribosomal protein bL32 family.

This Campylobacter jejuni subsp. jejuni serotype O:2 (strain ATCC 700819 / NCTC 11168) protein is Large ribosomal subunit protein bL32 (rpmF).